Here is a 180-residue protein sequence, read N- to C-terminus: Large ribosomal subunit protein uL6 (180 aa).

The protein belongs to the universal ribosomal protein uL6 family. As to quaternary structure, part of the 50S ribosomal subunit.

Functionally, this protein binds to the 23S rRNA, and is important in its secondary structure. It is located near the subunit interface in the base of the L7/L12 stalk, and near the tRNA binding site of the peptidyltransferase center. The sequence is that of Large ribosomal subunit protein uL6 from Flavobacterium johnsoniae (strain ATCC 17061 / DSM 2064 / JCM 8514 / BCRC 14874 / CCUG 350202 / NBRC 14942 / NCIMB 11054 / UW101) (Cytophaga johnsonae).